We begin with the raw amino-acid sequence, 359 residues long: MERLKVELGERSYPIEIAAGLLQHAEVLTQTIKGKRVMIVTNTVVAPLYLERIIQLLSGFQVEHLILPDGEAYKTLATFERIMSALLETNHGRDTTLIALGGGVIGDVVGFAAASYQRGIPFIQVPTTLLSQVDSSVGGKTAVNHPLGKNMIGAFYQPKHVVIDTECLKTLPAREFAAGMAEVIKYGIIWDAEFFSWLETNMSRLQALEPAALAYAIRRCCEIKADVVTQDETEHGVRALLNLGHTFGHAIEAEKGYGNWLHGEAVAAGMMMAASTAEARGDLDARQLARIRDLLLAANLPIQAPADMDFSAFIRHMRRDKKVLEGKLRLVLPVGIGHAQVVADVSDDELLAVIESGRE.

NAD(+) contacts are provided by residues 69-74 (DGEAYK), 103-107 (GVIGD), 127-128 (TT), Lys-140, Lys-149, and 167-170 (CLKT). Glu-182, His-245, and His-262 together coordinate Zn(2+).

Belongs to the sugar phosphate cyclases superfamily. Dehydroquinate synthase family. Co(2+) is required as a cofactor. Zn(2+) serves as cofactor. It depends on NAD(+) as a cofactor.

It localises to the cytoplasm. The catalysed reaction is 7-phospho-2-dehydro-3-deoxy-D-arabino-heptonate = 3-dehydroquinate + phosphate. It participates in metabolic intermediate biosynthesis; chorismate biosynthesis; chorismate from D-erythrose 4-phosphate and phosphoenolpyruvate: step 2/7. Its function is as follows. Catalyzes the conversion of 3-deoxy-D-arabino-heptulosonate 7-phosphate (DAHP) to dehydroquinate (DHQ). The polypeptide is 3-dehydroquinate synthase (Aeromonas salmonicida (strain A449)).